The following is a 436-amino-acid chain: bZIP transcription factor RISBZ1 (436 aa).

Residues Met-1–Ala-27 are required for transactivation activity. Residues Leu-182–Ala-258 form a disordered region. The span at Pro-215–Ala-225 shows a compositional bias: acidic residues. One can recognise a bZIP domain in the interval Glu-236–Leu-299. Residues Lys-238 to Lys-257 form a basic motif region. A leucine-zipper region spans residues Leu-264 to Leu-278.

As to quaternary structure, homodimer. Forms heterodimers with RISBZ2/BZP33 and RISBZ3/BZP20. Interacts with DOF3/RPBF. As to expression, specifically expressed in seeds. Expressed in aleurone and subaleurone layers of maturing seeds, but not in the embryo tissues.

It localises to the nucleus. In terms of biological role, transcriptional activator that binds to the DNA specific sequence 5'-TGAGTCA-3' found in seed storage protein gene promoters. Involved in the endosperm-specific regulation of storage protein genes. Can activate the expression of genes encoding for the seed storage proteins glutelin, prolamin, globulin and the allergen RAG1. Functions synergistically with DOF3/RPBF to positively regulate quantitatively many seed storage protein genes. Functions synergistically with DOF3/RPBF to positively regulate some metabolic enzymes, such as alanine aminotransferase and pyruvate phosphate dikinase, that are expressed in developing seeds. Functions synergistically with DOF3/RPBF to positively regulate genes that are key players in the development of aleurone layers. Functions synergistically with DOF3/RPBF to positively regulate the glutelin GLUD-1 gene in endosperm of developing seeds. Can activate the expression of the bifunctional lysine-degrading enzyme, lysine ketoglutarate reductase/saccharopine dehydrogenase (LKR/SDH), one of the key regulators determining free lysine content in plants. Functions as a key regulator of starch synthesis in seeds, by direct binding to the promoters of starch-synthesizing genes, such as AGPL3, WAXXY and SBE1. This Oryza sativa subsp. japonica (Rice) protein is bZIP transcription factor RISBZ1.